The sequence spans 155 residues: Small ribosomal subunit protein uS7cz/uS7cy (155 aa).

Belongs to the universal ribosomal protein uS7 family. As to quaternary structure, part of the 30S ribosomal subunit.

The protein resides in the plastid. It is found in the chloroplast. Its function is as follows. One of the primary rRNA binding proteins, it binds directly to 16S rRNA where it nucleates assembly of the head domain of the 30S subunit. This Jasminum nudiflorum (Winter jasmine) protein is Small ribosomal subunit protein uS7cz/uS7cy (rps7-A).